The chain runs to 152 residues: UPF0756 membrane protein JDM1_1594 (152 aa).

Helical transmembrane passes span 25-45, 52-72, 85-105, and 115-135; these read ATVV…LTTI, WGVT…QIGF, WIAV…VGLL, and LVFG…GPII.

The protein belongs to the UPF0756 family.

Its subcellular location is the cell membrane. In Lactiplantibacillus plantarum (strain JDM1) (Lactobacillus plantarum), this protein is UPF0756 membrane protein JDM1_1594.